The sequence spans 287 residues: ATP synthase gamma chain (287 aa).

It belongs to the ATPase gamma chain family. F-type ATPases have 2 components, CF(1) - the catalytic core - and CF(0) - the membrane proton channel. CF(1) has five subunits: alpha(3), beta(3), gamma(1), delta(1), epsilon(1). CF(0) has three main subunits: a, b and c.

It is found in the cell membrane. Functionally, produces ATP from ADP in the presence of a proton gradient across the membrane. The gamma chain is believed to be important in regulating ATPase activity and the flow of protons through the CF(0) complex. This Bacillus velezensis (strain DSM 23117 / BGSC 10A6 / LMG 26770 / FZB42) (Bacillus amyloliquefaciens subsp. plantarum) protein is ATP synthase gamma chain.